A 129-amino-acid polypeptide reads, in one-letter code: Large ribosomal subunit protein uL14m (129 aa).

The protein belongs to the universal ribosomal protein uL14 family. Component of the mitochondrial ribosome large subunit (39S) which comprises a 16S rRNA and about 50 distinct proteins.

Its subcellular location is the mitochondrion. The sequence is that of Large ribosomal subunit protein uL14m (mrpl14) from Dictyostelium discoideum (Social amoeba).